The chain runs to 1234 residues: Protein Jumonji (1234 aa).

Positions 1–11 (MSKERPKRNII) are enriched in basic residues. Disordered regions lie at residues 1–22 (MSKERPKRNIIQKKYDDSDGIP), 68–150 (AKAL…LSKR), 169–339 (LPNS…VKYT), and 354–548 (RELV…GKSG). S78 carries the phosphoserine modification. The span at 86-98 (SQVSSTSNDVSSS) shows a compositional bias: low complexity. Residues 104 to 110 (PSRKRPR) carry the Nuclear localization signal motif. Residues 117–129 (FAQSQPNSPSTTP) show a composition bias toward polar residues. Residues 141–170 (ATQISDLSKRKPKTEDFLTFLCLRGSPALP) form a sufficient for interaction with the PRC2 complex region. Residues 180-193 (QDEEDVEEEDDETE) show a composition bias toward acidic residues. A compositionally biased stretch (polar residues) spans 197-210 (ATTNNASSSCQSTP). Basic residues predominate over residues 211-221 (RKGKTHKHVHN). Residues 244–264 (KEATPGKEKHSEPRADSRREQ) show a composition bias toward basic and acidic residues. The span at 265–285 (ASGAQPTAASAAASSAKGLAA) shows a compositional bias: low complexity. Polar residues-rich tracts occupy residues 304–322 (SKVNGVTRMSSLGAGTNSA) and 369–384 (SAVNHTISGKTESSNA). Position 378 is an N6-acetyllysine (K378). Over residues 418–440 (CTKEVGGRQLREGLRNSKRRLEE) the composition is skewed to basic and acidic residues. S449 is subject to Phosphoserine. Composition is skewed to basic and acidic residues over residues 482-494 (VKKEVPERSLERN) and 529-544 (SSHKPHDPQGKPEKGS). In terms of domain architecture, JmjN spans 555–596 (IPVLRPSAKEFHDPLIYIESVRAQVEKYGMCRVIPPPDWRPE). The ARID domain maps to 619-711 (WGPNVQRLAC…YLLSYDSLSP (93 aa)). Residues 872 to 876 (GSGFP) carry the GSGFP motif motif. The 165-residue stretch at 882 to 1046 (PFSRHGWNLT…MGFETAKEMK (165 aa)) folds into the JmjC domain. Residues 1206–1234 (ENCLNKPTPKRGPRKRATVDVPPSRLPSS) are disordered.

The protein belongs to the JARID2 family. In terms of assembly, associates with the PRC2 complex, which consists of the core components EED, EZH1 or EZH2, SUZ12, and RBBP4, and various combinations of accessory subunits including AEBP2, JARID2, PHF19, MTF2 and EPOP. Found in a monomeric PRC2.2 (class 2) complex consisting of at least SUZ12, RBBP4, AEBP2 and JARID2. Facilitates nucleosome binding of the PRC2 complex. Interacts with SUZ12 (via C2H2-type zinc finger domain); the interaction is direct; competes with EPOP for SUZ12 binding. Interacts with histone methyltransferases EHMT1/GLP1 and EHMT2/G9a. Interacts with GATA4 (via the N-terminal region). Interacts with NKX2-5 (via the C-terminal region). Interacts with RB1. Interacts with ZNF496. Interacts with ESRRB. Interacts with DDX18; this interaction inhibits the PRC2 complex. In terms of tissue distribution, widely expressed in embryos. In adults, expressed at high levels in heart, skeletal muscle, brain and thymus.

It localises to the nucleus. Its function is as follows. Regulator of histone methyltransferase complexes that plays an essential role in embryonic development, including heart and liver development, neural tube fusion process and hematopoiesis. Acts as an accessory subunit for the core PRC2 (Polycomb repressive complex 2) complex, which mediates histone H3K27 (H3K27me3) trimethylation on chromatin. Binds DNA and mediates the recruitment of the PRC2 complex to target genes in embryonic stem cells, thereby playing a key role in stem cell differentiation and normal embryonic development. In cardiac cells, it is required to repress expression of cyclin-D1 (CCND1) by activating methylation of 'Lys-9' of histone H3 (H3K9me) by the GLP1/EHMT1 and G9a/EHMT2 histone methyltransferases. Also acts as a transcriptional repressor of ANF via its interaction with GATA4 and NKX2-5. Participates in the negative regulation of cell proliferation signaling. Does not have histone demethylase activity. This is Protein Jumonji (Jarid2) from Mus musculus (Mouse).